A 183-amino-acid chain; its full sequence is Ribosome-recycling factor (183 aa).

The protein belongs to the RRF family.

The protein localises to the cytoplasm. Functionally, responsible for the release of ribosomes from messenger RNA at the termination of protein biosynthesis. May increase the efficiency of translation by recycling ribosomes from one round of translation to another. The chain is Ribosome-recycling factor from Bifidobacterium longum (strain DJO10A).